Reading from the N-terminus, the 517-residue chain is Carotenoid phi-ring synthase (517 aa).

Residues 1–24 (MFARDSGRGHRHGRDRQAAVVPAP) are disordered. FAD contacts are provided by residues A45, 64–65 (ER), R72, Y99, D461, and M472.

It belongs to the carotenoid/retinoid oxidoreductase family. FAD is required as a cofactor.

The catalysed reaction is a carotenoid beta-end derivative + 2 A = a carotenoid phi-end derivative + 2 AH2. Its pathway is carotenoid biosynthesis. Its function is as follows. Involved in the biosynthesis of isorenieratene, a carotenoid with aromatic end groups. Catalyzes the introduction of two additional double bonds into each ionone ring of beta-carotene to produce isorenieratene. The reaction includes an intramolecular methyl transfer from position C1 to position C2 of the ring. This chain is Carotenoid phi-ring synthase, found in Streptomyces griseus.